The sequence spans 311 residues: uncharacterized protein (311 aa).

The signal sequence occupies residues 1-13 (MLLSLIFPIAVLG). The N-linked (GlcNAc...) asparagine glycan is linked to Asn-115.

Its subcellular location is the secreted. This is an uncharacterized protein from Encephalitozoon cuniculi (strain GB-M1) (Microsporidian parasite).